Here is a 351-residue protein sequence, read N- to C-terminus: Peptide chain release factor 1 (351 aa).

Q230 is subject to N5-methylglutamine.

This sequence belongs to the prokaryotic/mitochondrial release factor family. Post-translationally, methylated by PrmC. Methylation increases the termination efficiency of RF1.

It localises to the cytoplasm. In terms of biological role, peptide chain release factor 1 directs the termination of translation in response to the peptide chain termination codons UAG and UAA. The chain is Peptide chain release factor 1 from Onion yellows phytoplasma (strain OY-M).